Consider the following 37-residue polypeptide: Large ribosomal subunit protein bL36 (37 aa).

Belongs to the bacterial ribosomal protein bL36 family.

In Thermus thermophilus (strain ATCC BAA-163 / DSM 7039 / HB27), this protein is Large ribosomal subunit protein bL36.